Here is a 662-residue protein sequence, read N- to C-terminus: Sporulation protein RMD8 (662 aa).

Disordered stretches follow at residues 1–136 (MSYK…RTSK), 286–320 (YELE…SFNP), and 346–406 (LKKE…QNDF). At serine 2 the chain carries N-acetylserine. The segment covering 99-121 (SARREERLSSSSSDRPRQYERLS) has biased composition (basic and acidic residues). Residues 286–304 (YELETSGNNNNANQDTTTV) show a composition bias toward polar residues. Over residues 383 to 395 (SSRSPASPSSIST) the composition is skewed to low complexity. A helical membrane pass occupies residues 630-647 (VTWWFILVILFGVIFSLT).

Belongs to the RMD1/sif2 family.

It is found in the membrane. Required for sporulation. The sequence is that of Sporulation protein RMD8 (RMD8) from Saccharomyces cerevisiae (strain ATCC 204508 / S288c) (Baker's yeast).